Reading from the N-terminus, the 161-residue chain is 18.1 kDa class I heat shock protein (161 aa).

Positions 47-161 constitute a sHSP domain; sequence ETAAFAGARI…PDVKSIQVTG (115 aa).

It belongs to the small heat shock protein (HSP20) family. May form oligomeric structures.

Its subcellular location is the cytoplasm. This chain is 18.1 kDa class I heat shock protein (HSP18.1), found in Oryza sativa subsp. japonica (Rice).